The sequence spans 267 residues: Tryptophan synthase alpha chain (267 aa).

Active-site proton acceptor residues include Glu-49 and Asp-60.

This sequence belongs to the TrpA family. In terms of assembly, tetramer of two alpha and two beta chains.

It catalyses the reaction (1S,2R)-1-C-(indol-3-yl)glycerol 3-phosphate + L-serine = D-glyceraldehyde 3-phosphate + L-tryptophan + H2O. It participates in amino-acid biosynthesis; L-tryptophan biosynthesis; L-tryptophan from chorismate: step 5/5. Functionally, the alpha subunit is responsible for the aldol cleavage of indoleglycerol phosphate to indole and glyceraldehyde 3-phosphate. The chain is Tryptophan synthase alpha chain from Cyanothece sp. (strain PCC 7425 / ATCC 29141).